Reading from the N-terminus, the 262-residue chain is uncharacterized protein (262 aa).

The Radical SAM core domain maps to 1–211; sequence MAFHVMIIPS…LLYLLDSYLE (211 aa). 3 residues coordinate [4Fe-4S] cluster: Cys13, Cys17, and Cys20.

Belongs to the radical SAM superfamily. Anaerobic sulfatase-maturating enzyme family. [4Fe-4S] cluster serves as cofactor.

This is an uncharacterized protein from Methanothermobacter thermautotrophicus (strain ATCC 29096 / DSM 1053 / JCM 10044 / NBRC 100330 / Delta H) (Methanobacterium thermoautotrophicum).